The sequence spans 747 residues: MAPDSGPFPDGQLLKLLPVDPRDRDTQRCRLGPAAFRSLGARLGSPLRISLPAGGCCLCTAWPRRDRVDGFVQLDPQCASPGARVATGRIGMDCLQPVPCPPLRRLEVWPVLRPQAGAPSSAAVLEVVHELLRNRPVSRGHVVTTPPGVPGPVAALHVMGGTPDPEPGGWVTPHTRITLSDKPPPQVEPPGEVTLGGLSETADSLRELLRLPLRYPLALAALGLAVPRGVLLAGPPGVGKTQLVRAVARETGAELLAVSAPALQGSRPGETEENVRRIFQRAQELASRGPSLLFLDEVDALCPRRGGPHRAPESRVVAQVLTLLDGIHRDREFVVVGATNRPDELDPALRRPGRFDREVVIGTPTLKQREAILQVITSKMPISSHIDLGLLAEMTVGYVGADLTALCREAAMCALLKNEKNQDSPKIEETDFLEAFKKIQPSSFRSSTGLMDIKPVGWEQIGGLEDVKLKLKQCVEWPLKFPQEFARMGLTQPKGLLLYGPPGCAKTTLVRALATGCHCSFVSVCGADLFSPFVGDSEKVLSQVFRQARANTPALVFLDEIDSVLGSRSVGTSGCDARERVLSVLLNELDGVGVRTVERRGSKASQQECQEILSRSVMIVVATNRPDVLDDALLRPGRLDKIIYVPPPDQEGRLSILKVCTNNMPVGPDVSLENLAAETCFFSGADLRNLCKEAALFALQENGLEATTVRQEHFTEALKTVKPSLTLKELTFYENLFKKGLSNLEDD.

Met1 carries the post-translational modification N-acetylmethionine. ATP is bound by residues 234–241 and 500–507; these read GPPGVGKT and GPPGCAKT.

Belongs to the AAA ATPase family. AFG2 subfamily. In terms of assembly, part of the 55LCC heterohexameric ATPase complex composed at least of AIRIM, AFG2A, AFG2B and CINP. Associates with pre-60S ribosomal particles. In terms of tissue distribution, in adult ear, expressed at low levels in neurosensory hair cells (inner and outer) and supporting cells (pillar and Deiter cells).

It localises to the cytoplasm. It is found in the cytoskeleton. The protein localises to the spindle. Its subcellular location is the nucleus. The catalysed reaction is ATP + H2O = ADP + phosphate + H(+). With respect to regulation, in the context of 55LCC heterohexameric ATPase complex, the ATPase activity is stimulated by DNA binding and inhibited in presence of RNA. Functionally, ATP-dependent chaperone part of the 55LCC heterohexameric ATPase complex which is chromatin-associated and promotes replisome proteostasis to maintain replication fork progression and genome stability. Required for replication fork progression, sister chromatid cohesion, and chromosome stability. The ATPase activity is specifically enhanced by replication fork DNA and is coupled to cysteine protease-dependent cleavage of replisome substrates in response to replication fork damage. Uses ATPase activity to process replisome substrates in S-phase, facilitating their proteolytic turnover from chromatin to ensure DNA replication and mitotic fidelity. Plays an essential role in the cytoplasmic maturation steps of pre-60S ribosomal particles by promoting the release of shuttling protein RSL24D1/RLP24 from the pre-ribosomal particles. This is ATPase family gene 2 protein homolog B (Afg2b) from Mus musculus (Mouse).